The chain runs to 234 residues: Triosephosphate isomerase (234 aa).

8-10 (NFK) is a binding site for substrate. Residue His-90 is the Electrophile of the active site. Glu-159 acts as the Proton acceptor in catalysis. Positions 165 and 197 each coordinate substrate.

Belongs to the triosephosphate isomerase family. Homodimer.

Its subcellular location is the cytoplasm. The enzyme catalyses D-glyceraldehyde 3-phosphate = dihydroxyacetone phosphate. Its pathway is carbohydrate biosynthesis; gluconeogenesis. It functions in the pathway carbohydrate degradation; glycolysis; D-glyceraldehyde 3-phosphate from glycerone phosphate: step 1/1. Functionally, involved in the gluconeogenesis. Catalyzes stereospecifically the conversion of dihydroxyacetone phosphate (DHAP) to D-glyceraldehyde-3-phosphate (G3P). The chain is Triosephosphate isomerase from Helicobacter pylori (strain G27).